The primary structure comprises 396 residues: uncharacterized protein (396 aa).

The next 11 membrane-spanning stretches (helical) occupy residues 7-27, 36-56, 62-82, 94-114, 159-179, 218-238, 250-270, 285-305, 310-330, 340-360, and 367-387; these read SDDVWVLWGFIAVWAAVSIGL, AVSGAIIALAGAMVFTNVGVL, VYDTVWSYVVPLAIPLLLFQI, LLFIFLISSVGTVLGSILAFF, VVADNFMMALLFFILISIPAL, IAFNAGAAFALVAVSMKVSGY, GTLGDQYLVLTSLTVLIIFLF, TFLIYLFFVVIGIPADLRLIV, LILLFVFIIAISNLAVSLAAG, ILLAVNATVGGPTTAAAMAIA, and VAPIMLVGTLGYLIGNYVGTF.

Its subcellular location is the cell membrane. This is an uncharacterized protein from Bacillus subtilis (strain 168).